The following is a 603-amino-acid chain: DNA-directed RNA polymerase subunit beta' N-terminal section (603 aa).

Zn(2+)-binding residues include Cys-283, Cys-285, Cys-329, and Cys-332.

It belongs to the RNA polymerase beta' chain family. RpoC1 subfamily. In plastids the minimal PEP RNA polymerase catalytic core is composed of four subunits: alpha, beta, beta', and beta''. When a (nuclear-encoded) sigma factor is associated with the core the holoenzyme is formed, which can initiate transcription. The cofactor is Zn(2+).

It is found in the plastid. Its subcellular location is the chloroplast. The catalysed reaction is RNA(n) + a ribonucleoside 5'-triphosphate = RNA(n+1) + diphosphate. Its function is as follows. DNA-dependent RNA polymerase catalyzes the transcription of DNA into RNA using the four ribonucleoside triphosphates as substrates. In Chlamydomonas reinhardtii (Chlamydomonas smithii), this protein is DNA-directed RNA polymerase subunit beta' N-terminal section (rpoC1A).